The primary structure comprises 119 residues: Putative membrane protein insertion efficiency factor (119 aa).

Belongs to the UPF0161 family.

Its subcellular location is the cell inner membrane. Its function is as follows. Could be involved in insertion of integral membrane proteins into the membrane. The polypeptide is Putative membrane protein insertion efficiency factor (Agrobacterium fabrum (strain C58 / ATCC 33970) (Agrobacterium tumefaciens (strain C58))).